We begin with the raw amino-acid sequence, 194 residues long: Transmembrane protein 212 (194 aa).

5 helical membrane-spanning segments follow: residues 11–31 (ILVT…FPVF), 44–64 (IACP…LLLA), 76–96 (ATFT…AIAL), 99–119 (ALLG…NYLG), and 148–168 (LQAL…TVFI).

It is found in the membrane. This is Transmembrane protein 212 (TMEM212) from Homo sapiens (Human).